The following is a 97-amino-acid chain: Large ribosomal subunit protein bL28 (97 aa).

This sequence belongs to the bacterial ribosomal protein bL28 family.

The sequence is that of Large ribosomal subunit protein bL28 from Bartonella henselae (strain ATCC 49882 / DSM 28221 / CCUG 30454 / Houston 1) (Rochalimaea henselae).